The sequence spans 137 residues: Methylglyoxal synthase (137 aa).

In terms of domain architecture, MGS-like spans 1–137 (MNIALVAHDK…KLSHNDEPPA (137 aa)). Residues histidine 8, lysine 12, 34-37 (TGTT), and 54-55 (SG) each bind substrate. Aspartate 60 (proton donor/acceptor) is an active-site residue. Histidine 87 contributes to the substrate binding site.

This sequence belongs to the methylglyoxal synthase family.

The enzyme catalyses dihydroxyacetone phosphate = methylglyoxal + phosphate. Catalyzes the formation of methylglyoxal from dihydroxyacetone phosphate. The sequence is that of Methylglyoxal synthase from Exiguobacterium sp. (strain ATCC BAA-1283 / AT1b).